The chain runs to 471 residues: Type 2 glycosyltransferase (471 aa).

The chain crosses the membrane as a helical span at residues 4-24 (ILGWFWAFVSAFVLRYLRTIV). 3 N-linked (GlcNAc...) asparagine glycosylation sites follow: Asn-29, Asn-88, and Asn-222. 3 helical membrane-spanning segments follow: residues 305–325 (CLQT…FYSL), 339–359 (MAFT…KLWG), and 368–388 (VIYI…KFWG). N-linked (GlcNAc...) asparagine glycosylation occurs at Asn-458.

This sequence belongs to the GT2 glycosyltransferase family.

Its subcellular location is the cell membrane. In terms of biological role, glycosyltransferase involved in the maintenance of the outermost surface of the fungal cell wall. Likely functions in the synthesis of a currently unknown, potentially minor but widespread, extracellular or outer cell wall polysaccharide which plays a key role in facilitating many interactions between plants and fungi by enabling hyphal growth on solid matrices. In Zymoseptoria tritici (strain CBS 115943 / IPO323) (Speckled leaf blotch fungus), this protein is Type 2 glycosyltransferase.